A 284-amino-acid polypeptide reads, in one-letter code: Ribosomal RNA small subunit methyltransferase A (284 aa).

Positions 33, 35, 60, 81, 101, and 124 each coordinate S-adenosyl-L-methionine.

Belongs to the class I-like SAM-binding methyltransferase superfamily. rRNA adenine N(6)-methyltransferase family. RsmA subfamily.

Its subcellular location is the cytoplasm. The catalysed reaction is adenosine(1518)/adenosine(1519) in 16S rRNA + 4 S-adenosyl-L-methionine = N(6)-dimethyladenosine(1518)/N(6)-dimethyladenosine(1519) in 16S rRNA + 4 S-adenosyl-L-homocysteine + 4 H(+). Specifically dimethylates two adjacent adenosines (A1518 and A1519) in the loop of a conserved hairpin near the 3'-end of 16S rRNA in the 30S particle. May play a critical role in biogenesis of 30S subunits. This chain is Ribosomal RNA small subunit methyltransferase A, found in Chlamydia felis (strain Fe/C-56) (Chlamydophila felis).